A 350-amino-acid polypeptide reads, in one-letter code: Nicotinate-nucleotide--dimethylbenzimidazole phosphoribosyltransferase (350 aa).

Glu316 serves as the catalytic Proton acceptor.

Belongs to the CobT family.

It catalyses the reaction 5,6-dimethylbenzimidazole + nicotinate beta-D-ribonucleotide = alpha-ribazole 5'-phosphate + nicotinate + H(+). It functions in the pathway nucleoside biosynthesis; alpha-ribazole biosynthesis; alpha-ribazole from 5,6-dimethylbenzimidazole: step 1/2. In terms of biological role, catalyzes the synthesis of alpha-ribazole-5'-phosphate from nicotinate mononucleotide (NAMN) and 5,6-dimethylbenzimidazole (DMB). This is Nicotinate-nucleotide--dimethylbenzimidazole phosphoribosyltransferase from Pseudomonas syringae pv. tomato (strain ATCC BAA-871 / DC3000).